The sequence spans 605 residues: Isocitrate dehydrogenase kinase/phosphatase (605 aa).

ATP contacts are provided by residues Ala-327 to Leu-333 and Lys-348. Asp-383 is an active-site residue.

This sequence belongs to the AceK family.

It localises to the cytoplasm. It catalyses the reaction L-seryl-[isocitrate dehydrogenase] + ATP = O-phospho-L-seryl-[isocitrate dehydrogenase] + ADP + H(+). Functionally, bifunctional enzyme which can phosphorylate or dephosphorylate isocitrate dehydrogenase (IDH) on a specific serine residue. This is a regulatory mechanism which enables bacteria to bypass the Krebs cycle via the glyoxylate shunt in response to the source of carbon. When bacteria are grown on glucose, IDH is fully active and unphosphorylated, but when grown on acetate or ethanol, the activity of IDH declines drastically concomitant with its phosphorylation. This chain is Isocitrate dehydrogenase kinase/phosphatase, found in Burkholderia orbicola (strain MC0-3).